The chain runs to 32 residues: Photosystem II reaction center protein T (32 aa).

M1 is modified (N-formylmethionine). The Lumenal segment spans residues 1–2 (ME). The helical transmembrane segment at 3 to 23 (TITYVFIFACIIALFFFAIFF) threads the bilayer. The Cytoplasmic segment spans residues 24–32 (REPPRITKK).

The protein belongs to the PsbT family. PSII is composed of 1 copy each of membrane proteins PsbA, PsbB, PsbC, PsbD, PsbE, PsbF, PsbH, PsbI, PsbJ, PsbK, PsbL, PsbM, PsbT, PsbX, PsbY, PsbZ, Psb30/Ycf12, PsbO, CyanoQ (PsbQ), PsbU, PsbV and a large number of cofactors. It forms dimeric complexes. Part of a photosystem II (PSII) assembly intermediate complex PSII-I; crystallized from a strain deleted of psbJ, it forms monomeric PSII before addition of the oxygen evolving complex. PSII-I includes 3 assembly factors not found in mature PSII (Psb27, Psb28 and Psb34). PSII binds multiple chlorophylls, carotenoids and specific lipids. is required as a cofactor.

The protein resides in the cellular thylakoid membrane. In terms of biological role, found at the monomer-monomer interface of the photosystem II (PS II) dimer, plays a role in assembly and dimerization of PSII. PSII is a light-driven water plastoquinone oxidoreductase, using light energy to abstract electrons from H(2)O, generating a proton gradient subsequently used for ATP formation. The sequence is that of Photosystem II reaction center protein T from Thermosynechococcus vestitus (strain NIES-2133 / IAM M-273 / BP-1).